Consider the following 984-residue polypeptide: MORC family CW-type zinc finger protein 1 (984 aa).

The stretch at 284 to 353 forms a coiled coil; that stretch reads AFKDEVKKAE…RELKTARTLS (70 aa). The CW-type zinc-finger motif lies at 477-531; it reads AMGIPFIIQCDLCLKWRVLPSSTNYQEKEFFDIWICANNPNRLENSCHQVECLPS. Zn(2+) contacts are provided by Cys486, Cys489, Cys512, and Cys523. Coiled-coil stretches lie at residues 737–761 and 900–934; these read DVSL…CNDV and EISL…LQLG.

The protein localises to the nucleus. In terms of biological role, required for spermatogenesis. Essential for de novo DNA methylation and silencing of transposable elements in the male embryonic germ cells. The chain is MORC family CW-type zinc finger protein 1 from Homo sapiens (Human).